Here is a 620-residue protein sequence, read N- to C-terminus: Dihydroxy-acid dehydratase (620 aa).

Asp82 is a Mg(2+) binding site. Cys123 lines the [2Fe-2S] cluster pocket. Mg(2+) contacts are provided by Asp124 and Lys125. N6-carboxylysine is present on Lys125. [2Fe-2S] cluster is bound at residue Cys197. Residue Glu493 coordinates Mg(2+). The Proton acceptor role is filled by Ser519.

Belongs to the IlvD/Edd family. As to quaternary structure, homodimer. Requires [2Fe-2S] cluster as cofactor. Mg(2+) is required as a cofactor.

It catalyses the reaction (2R)-2,3-dihydroxy-3-methylbutanoate = 3-methyl-2-oxobutanoate + H2O. It carries out the reaction (2R,3R)-2,3-dihydroxy-3-methylpentanoate = (S)-3-methyl-2-oxopentanoate + H2O. It participates in amino-acid biosynthesis; L-isoleucine biosynthesis; L-isoleucine from 2-oxobutanoate: step 3/4. The protein operates within amino-acid biosynthesis; L-valine biosynthesis; L-valine from pyruvate: step 3/4. Its function is as follows. Functions in the biosynthesis of branched-chain amino acids. Catalyzes the dehydration of (2R,3R)-2,3-dihydroxy-3-methylpentanoate (2,3-dihydroxy-3-methylvalerate) into 2-oxo-3-methylpentanoate (2-oxo-3-methylvalerate) and of (2R)-2,3-dihydroxy-3-methylbutanoate (2,3-dihydroxyisovalerate) into 2-oxo-3-methylbutanoate (2-oxoisovalerate), the penultimate precursor to L-isoleucine and L-valine, respectively. This chain is Dihydroxy-acid dehydratase, found in Bifidobacterium longum subsp. infantis (strain ATCC 15697 / DSM 20088 / JCM 1222 / NCTC 11817 / S12).